A 364-amino-acid chain; its full sequence is Anthranilate N-methyltransferase (364 aa).

Residues 1–20 (MGSLSESHTQYKHGVEVEED) form a disordered region. 4 residues coordinate S-adenosyl-L-methionine: glycine 209, aspartate 232, methionine 253, and lysine 266. Histidine 270 (proton acceptor) is an active-site residue.

The protein belongs to the class I-like SAM-binding methyltransferase superfamily. Cation-independent O-methyltransferase family. COMT subfamily. As to quaternary structure, homodimer. As to expression, expressed in leaves, flowers, stems and roots. Detected in the vascular tissues in stems, in the rhizodermis or the endodermis of roots, in the inside of carpels, in the central vascular bundles of the syncarp ovary and in the secretory oil glands located around the outer ovary wall.

The catalysed reaction is anthranilate + S-adenosyl-L-methionine = N-methylanthranilate + S-adenosyl-L-homocysteine + H(+). With respect to regulation, inhibited by Ca(2+), Co(2+), Fe(2+), Fe(3+), Cu(2+) or Zn(2+). No effect of Mg(2+). Involved in the biosynthesis of acridine alkaloids. N-methyltransferase with a strict substrate specificity for anthranilate. No activity with anthranilic acid methyl ester, anthraniloyl CoA, 3- or 4-amino-benzoic acid, salicylic acid, catechol, eugenol, caffeic acid, quercetin, theobromin, theophyllin, putrescine and nicotinic acid among others. This Ruta graveolens (Common rue) protein is Anthranilate N-methyltransferase.